A 227-amino-acid polypeptide reads, in one-letter code: ATP-dependent dethiobiotin synthetase BioD (227 aa).

13–18 contacts ATP; the sequence is NIGKTI. Residue Thr-17 participates in Mg(2+) binding. Residue Lys-38 is part of the active site. Ser-42 is a substrate binding site. Residues Asp-55, 117–120, 177–178, 206–208, and Asn-213 each bind ATP; these read EGFG, NH, and PFI. 2 residues coordinate Mg(2+): Asp-55 and Glu-117.

Belongs to the dethiobiotin synthetase family. In terms of assembly, homodimer. Requires Mg(2+) as cofactor.

It is found in the cytoplasm. It catalyses the reaction (7R,8S)-7,8-diammoniononanoate + CO2 + ATP = (4R,5S)-dethiobiotin + ADP + phosphate + 3 H(+). The protein operates within cofactor biosynthesis; biotin biosynthesis; biotin from 7,8-diaminononanoate: step 1/2. Catalyzes a mechanistically unusual reaction, the ATP-dependent insertion of CO2 between the N7 and N8 nitrogen atoms of 7,8-diaminopelargonic acid (DAPA, also called 7,8-diammoniononanoate) to form a ureido ring. This chain is ATP-dependent dethiobiotin synthetase BioD, found in Wigglesworthia glossinidia brevipalpis.